Here is a 137-residue protein sequence, read N- to C-terminus: Large ribosomal subunit protein uL16 (137 aa).

This sequence belongs to the universal ribosomal protein uL16 family. In terms of assembly, part of the 50S ribosomal subunit.

Its function is as follows. Binds 23S rRNA and is also seen to make contacts with the A and possibly P site tRNAs. This Methylocella silvestris (strain DSM 15510 / CIP 108128 / LMG 27833 / NCIMB 13906 / BL2) protein is Large ribosomal subunit protein uL16.